The primary structure comprises 347 residues: Phenylalanine--tRNA ligase alpha subunit (347 aa).

The segment at 83–111 is disordered; sequence QNLSGGDDSGADPTFDPTLPGTRPSLGHI. Residue E274 coordinates Mg(2+).

The protein belongs to the class-II aminoacyl-tRNA synthetase family. Phe-tRNA synthetase alpha subunit type 1 subfamily. In terms of assembly, tetramer of two alpha and two beta subunits. Requires Mg(2+) as cofactor.

It is found in the cytoplasm. The catalysed reaction is tRNA(Phe) + L-phenylalanine + ATP = L-phenylalanyl-tRNA(Phe) + AMP + diphosphate + H(+). The polypeptide is Phenylalanine--tRNA ligase alpha subunit (Rhodopirellula baltica (strain DSM 10527 / NCIMB 13988 / SH1)).